Reading from the N-terminus, the 638-residue chain is Poly(A)-specific ribonuclease PARN (638 aa).

A divalent metal cation-binding residues include aspartate 28 and glutamate 30. The interval 143 to 165 (REQYDEKRSQSNGAGALSYTSPN) is disordered. A compositionally biased stretch (polar residues) spans 152–165 (QSNGAGALSYTSPN). A phosphoserine mark is found at serine 163 and serine 167. In terms of domain architecture, R3H spans 178-245 (KKFIDQVVEK…ERYIVISKVD (68 aa)). Lysine 220 bears the N6-acetyllysine mark. A divalent metal cation-binding residues include aspartate 292 and aspartate 382. At lysine 499 the chain carries N6-acetyllysine. Serine 530 carries the phosphoserine modification. Serine 557 is subject to Phosphoserine; by MAPKAPK2. Positions 573–638 (RAEAGLEARA…AKLFEVPDTW (66 aa)) are disordered. Serine 583 and serine 587 each carry phosphoserine. Positions 606–615 (KKAKKLKRMK) are enriched in basic residues. Phosphoserine occurs at positions 619, 623, and 627.

This sequence belongs to the CAF1 family. Homodimer. Found in a mRNA decay complex with RENT1, RENT2 and RENT3B. Interacts with KHSRP. Interacts with CELF1/CUGBP1. Interacts with ZC3HAV1 in an RNA-independent manner. Interacts with DHX36. The cofactor is Mg(2+). Phosphorylation by MAPKAPK2, preventing GADD45A mRNA degradation after genotoxic stress.

The protein localises to the nucleus. The protein resides in the cytoplasm. It localises to the nucleolus. It carries out the reaction Exonucleolytic cleavage of poly(A) to 5'-AMP.. Its function is as follows. 3'-exoribonuclease that has a preference for poly(A) tails of mRNAs, thereby efficiently degrading poly(A) tails. Exonucleolytic degradation of the poly(A) tail is often the first step in the decay of eukaryotic mRNAs and is also used to silence certain maternal mRNAs translationally during oocyte maturation and early embryonic development. Involved in nonsense-mediated mRNA decay, a critical process of selective degradation of mRNAs that contain premature stop codons. Also involved in degradation of inherently unstable mRNAs that contain AU-rich elements (AREs) in their 3'-UTR, possibly via its interaction with KHSRP. Probably mediates the removal of poly(A) tails of AREs mRNAs, which constitutes the first step of destabilization. Interacts with both the 3'-end poly(A) tail and the 5'-end cap structure during degradation, the interaction with the cap structure being required for an efficient degradation of poly(A) tails. Also able to recognize poly(A) tails of microRNAs such as MIR21 and H/ACA box snoRNAs (small nucleolar RNAs) leading to microRNAs degradation or snoRNA increased stability. This Bos taurus (Bovine) protein is Poly(A)-specific ribonuclease PARN (PARN).